Reading from the N-terminus, the 61-residue chain is Photosystem II reaction center protein K (61 aa).

The propeptide occupies 1–24 (MLNIFCLICICLNSTLYSSSFFFA). The helical transmembrane segment at 32-52 (FFNPIIDVMPIIPVLFFLLAF) threads the bilayer.

This sequence belongs to the PsbK family. PSII is composed of 1 copy each of membrane proteins PsbA, PsbB, PsbC, PsbD, PsbE, PsbF, PsbH, PsbI, PsbJ, PsbK, PsbL, PsbM, PsbT, PsbX, PsbY, PsbZ, Psb30/Ycf12, at least 3 peripheral proteins of the oxygen-evolving complex and a large number of cofactors. It forms dimeric complexes.

It localises to the plastid. The protein localises to the chloroplast thylakoid membrane. Functionally, one of the components of the core complex of photosystem II (PSII). PSII is a light-driven water:plastoquinone oxidoreductase that uses light energy to abstract electrons from H(2)O, generating O(2) and a proton gradient subsequently used for ATP formation. It consists of a core antenna complex that captures photons, and an electron transfer chain that converts photonic excitation into a charge separation. In Phalaenopsis aphrodite subsp. formosana (Moth orchid), this protein is Photosystem II reaction center protein K.